The chain runs to 252 residues: Phosphoglycolate phosphatase (252 aa).

The active-site Nucleophile is aspartate 13. Aspartate 13, aspartate 15, and aspartate 192 together coordinate Mg(2+).

This sequence belongs to the HAD-like hydrolase superfamily. CbbY/CbbZ/Gph/YieH family. As to quaternary structure, monomer. The cofactor is Mg(2+). It depends on chloride as a cofactor.

The enzyme catalyses 2-phosphoglycolate + H2O = glycolate + phosphate. Its pathway is organic acid metabolism; glycolate biosynthesis; glycolate from 2-phosphoglycolate: step 1/1. In terms of biological role, specifically catalyzes the dephosphorylation of 2-phosphoglycolate. Is involved in the dissimilation of the intracellular 2-phosphoglycolate formed during the DNA repair of 3'-phosphoglycolate ends, a major class of DNA lesions induced by oxidative stress. This Salmonella typhimurium (strain LT2 / SGSC1412 / ATCC 700720) protein is Phosphoglycolate phosphatase.